We begin with the raw amino-acid sequence, 315 residues long: Acetaldehyde dehydrogenase 2 (315 aa).

Residue 13–16 (SGNI) coordinates NAD(+). Catalysis depends on Cys131, which acts as the Acyl-thioester intermediate. Residues 162–170 (SAGPGTRAN) and Asn290 each bind NAD(+).

This sequence belongs to the acetaldehyde dehydrogenase family.

The catalysed reaction is acetaldehyde + NAD(+) + CoA = acetyl-CoA + NADH + H(+). The protein is Acetaldehyde dehydrogenase 2 of Pseudomonas putida (strain W619).